Reading from the N-terminus, the 332-residue chain is 6-phosphogluconolactonase (332 aa).

It belongs to the cycloisomerase 2 family.

The enzyme catalyses 6-phospho-D-glucono-1,5-lactone + H2O = 6-phospho-D-gluconate + H(+). It functions in the pathway carbohydrate degradation; pentose phosphate pathway; D-ribulose 5-phosphate from D-glucose 6-phosphate (oxidative stage): step 2/3. Functionally, catalyzes the hydrolysis of 6-phosphogluconolactone to 6-phosphogluconate. The protein is 6-phosphogluconolactonase of Pectobacterium carotovorum subsp. carotovorum (strain PC1).